Consider the following 453-residue polypeptide: tRNA modification GTPase MnmE (453 aa).

(6S)-5-formyl-5,6,7,8-tetrahydrofolate-binding residues include Arg22, Glu79, and Lys119. The region spanning Gly215–Gly376 is the TrmE-type G domain. Asn225 is a binding site for K(+). GTP contacts are provided by residues Asn225–Ser230, Thr244–Thr250, Asp269–Gly272, and Asn334–Asp337. Mg(2+) is bound at residue Ser229. Residues Thr244, Ile246, and Thr249 each contribute to the K(+) site. Thr250 contacts Mg(2+). Residue Lys453 participates in (6S)-5-formyl-5,6,7,8-tetrahydrofolate binding.

Belongs to the TRAFAC class TrmE-Era-EngA-EngB-Septin-like GTPase superfamily. TrmE GTPase family. Homodimer. Heterotetramer of two MnmE and two MnmG subunits. Requires K(+) as cofactor.

The protein localises to the cytoplasm. Exhibits a very high intrinsic GTPase hydrolysis rate. Involved in the addition of a carboxymethylaminomethyl (cmnm) group at the wobble position (U34) of certain tRNAs, forming tRNA-cmnm(5)s(2)U34. This Shewanella baltica (strain OS185) protein is tRNA modification GTPase MnmE.